The primary structure comprises 576 residues: POU domain, class 6, transcription factor 1 (576 aa).

The interval 65 to 88 is disordered; sequence PAEAGSCDPDHSAEATVAARSPSE. A POU-specific domain is found at 414 to 488; the sequence is EDGINLEEIR…VLEKWLMEAE (75 aa). Positions 509-568 form a DNA-binding region, homeobox; that stretch reads KRKRRTSFTPQAIEALNAYFEKNPLPTGQEITEIAKELNYDREVVRVWFCNRRQTLKNTS.

It belongs to the POU transcription factor family. Class-6 subfamily. Isoform C1 and isoform C2 are found in the brain, while isoform C7 is found in the testis.

Its subcellular location is the nucleus. Functionally, transcription factor that binds preferentially to a variant of the octamer motif (5'-ATGATAAT-3'). The chain is POU domain, class 6, transcription factor 1 (Pou6f1) from Mus musculus (Mouse).